The sequence spans 251 residues: CDP-diacylglycerol pyrophosphatase (251 aa).

A helical transmembrane segment spans residues 4 to 24 (AGLLFLVMIVIAVVAAGIGYW).

The protein belongs to the Cdh family.

The protein resides in the cell inner membrane. It catalyses the reaction a CDP-1,2-diacyl-sn-glycerol + H2O = a 1,2-diacyl-sn-glycero-3-phosphate + CMP + 2 H(+). It functions in the pathway phospholipid metabolism; CDP-diacylglycerol degradation; phosphatidate from CDP-diacylglycerol: step 1/1. This Escherichia coli O127:H6 (strain E2348/69 / EPEC) protein is CDP-diacylglycerol pyrophosphatase.